The sequence spans 310 residues: Adenylyl-sulfate kinase 4, chloroplastic (310 aa).

The transit peptide at 1-75 directs the protein to the chloroplast; the sequence is MDVAAMARCV…MAKDESISSR (75 aa). 116-124 provides a ligand contact to ATP; sequence GLSGSGKSS. Residues Asp146, Arg149, Arg163, Asn166, 189–190, and Gly239 each bind substrate; that span reads IS. Residue Ser190 is the Phosphoserine intermediate of the active site.

It belongs to the APS kinase family. Homodimer; disulfide-linked. As to expression, expressed in root vasculature, root tips, leaf epidermal and guard cells, pollen grains and radicle of immature seeds.

The protein localises to the plastid. The protein resides in the chloroplast. It catalyses the reaction adenosine 5'-phosphosulfate + ATP = 3'-phosphoadenylyl sulfate + ADP + H(+). Its pathway is sulfur metabolism; hydrogen sulfide biosynthesis; sulfite from sulfate: step 2/3. Functionally, catalyzes the phosphorylation of adenosine 5'-phosphosulfate to 3'-phosphoadenylyl sulfate, which is the activated sulfate form for sulfation reactions. Essential for plant reproduction and viability. The sequence is that of Adenylyl-sulfate kinase 4, chloroplastic (APK4) from Arabidopsis thaliana (Mouse-ear cress).